The chain runs to 341 residues: 1-aminocyclopropane-1-carboxylate deaminase (341 aa).

Ser-1 carries the post-translational modification N-acetylserine. Lys-51 bears the N6-(pyridoxal phosphate)lysine mark. Ser-78 serves as the catalytic Nucleophile.

It belongs to the ACC deaminase/D-cysteine desulfhydrase family. Homodimer. Requires pyridoxal 5'-phosphate as cofactor.

It catalyses the reaction 1-aminocyclopropane-1-carboxylate + H2O = 2-oxobutanoate + NH4(+). Its function is as follows. Catalyzes a cyclopropane ring-opening reaction, the irreversible conversion of 1-aminocyclopropane-1-carboxylate (ACC) to ammonia and alpha-ketobutyrate. The sequence is that of 1-aminocyclopropane-1-carboxylate deaminase from Cyberlindnera saturnus (Yeast).